The sequence spans 90 residues: Inactive casein kinase II subunit alpha-2 (90 aa).

Residues 40–48 (VGRGKYSEV) and Lys-63 contribute to the ATP site.

Belongs to the protein kinase superfamily. Ser/Thr protein kinase family. CK2 subfamily.

Functionally, the Nipponbare allele of HD6 contains a premature stop codon, resulting in a truncated non-functional product. This chain is Inactive casein kinase II subunit alpha-2, found in Oryza sativa subsp. japonica (Rice).